We begin with the raw amino-acid sequence, 277 residues long: MTAPILVATLDTRGPAATLGTITRAVRAAEAAGFDAVLIDDRAAAGVQGRFETTTLTAALAAVTEHIGLITAPLPADQAPYHVSRITASLDHLAHGRTGWLASTDTTDPEGRTGELIDVVRGLWDSFDDDAFVHDRADGLYWRLPAVHQLDHQGRHFDVAGPLNVARPPQGHPVVAVTGPALAAAADLVLLDEAADAASVKQQAPHAKILLPLPGPAAELPADSPADGFTVALTGSDDPVLAALAARPGRPDRTAATTLRERLGLARPESRHALTTA.

In terms of assembly, heterodimer of two subunits, SnaA and SnaB. FMN serves as cofactor.

Its function is as follows. Catalyzes the oxidation of the proline residue of pristinamycin IIB (PIIB) to pristinamycin IIA (PIIA). This is Pristinamycin IIA synthase subunit B (snaB) from Streptomyces pristinaespiralis.